The sequence spans 605 residues: Cystathionine gamma-synthase-like enzyme iboG1 (605 aa).

Y289 contributes to the substrate binding site. K393 is subject to N6-(pyridoxal phosphate)lysine.

It belongs to the trans-sulfuration enzymes family. It depends on pyridoxal 5'-phosphate as a cofactor.

It functions in the pathway secondary metabolite biosynthesis. In terms of biological role, cystathionine gamma-synthase-like enzyme; part of the gene cluster that mediates the biosynthesis of the psychoactive metabolites ibotenic acid and muscimol. The first committed step is glutamate hydroxylation by the 2-oxoglutarate-dependent dioxygenase iboH, and the last step is decarboxylation of ibotenic acid to muscimol by the decarboxylase iboD. The order of the intermediate reactions is somewhat ambiguous. IboA likely activates the carboxylic acid at position 5 to introduce an amide bond, and the flavin monooxygenase iboF generates the N-O bond. There are several options for the latter step. One option is that iboF directly hydroxylates the amide nitrogen formed by iboA to produce a hydroxamic acid species. Another option is that iboF hydroxylates an external N-containing compound, whose resulting N-O bond is subsequently introduced into the hydroxyglutamate scaffold. The paralogous PLP-dependent cystathionine gamma-synthase-like enzymes iboG1 and iboG2 are likely involved in substitution of the OH group at position 3 by the O-N moiety. The first cyclic intermediate is most probably tricholomic acid which is likely desaturated to ibotenic acid by the cytochrome P450 monooxygenase iboC. The chain is Cystathionine gamma-synthase-like enzyme iboG1 (iboG1) from Amanita muscaria (strain Koide BX008).